The following is a 520-amino-acid chain: Dual specificity tyrosine-phosphorylation-regulated kinase 4 (520 aa).

The interval 1-32 (MPASELKASEIPFHPSIKTQDPKAEEKSPKKQ) is disordered. The short motif at 19–37 (TQDPKAEEKSPKKQKVTLT) is the Bipartite nuclear localization signal element. Residues 20–29 (QDPKAEEKSP) show a composition bias toward basic and acidic residues. The 297-residue stretch at 104–400 (YEVLETIGKG…PDQALKHAWI (297 aa)) folds into the Protein kinase domain. ATP contacts are provided by residues 110–118 (IGKGSFGQV), lysine 133, and 183–186 (FELL). Aspartate 230 acts as the Proton acceptor in catalysis. Phosphotyrosine; by autocatalysis is present on tyrosine 264. Positions 404–467 (RNLKPQPRPQ…KHVQHSGDQQ (64 aa)) are disordered. Residues 439–457 (RKADEITKETTEKTKDSPT) are compositionally biased toward basic and acidic residues.

The protein belongs to the protein kinase superfamily. CMGC Ser/Thr protein kinase family. MNB/DYRK subfamily. Mg(2+) is required as a cofactor. Autophosphorylation on Tyr-264 in the activation loop is required for kinase activity.

Its subcellular location is the cytoplasm. It is found in the nucleus. It carries out the reaction L-seryl-[protein] + ATP = O-phospho-L-seryl-[protein] + ADP + H(+). It catalyses the reaction L-threonyl-[protein] + ATP = O-phospho-L-threonyl-[protein] + ADP + H(+). The enzyme catalyses L-tyrosyl-[protein] + ATP = O-phospho-L-tyrosyl-[protein] + ADP + H(+). Possible non-essential role in spermiogenesis. This is Dual specificity tyrosine-phosphorylation-regulated kinase 4 (DYRK4) from Homo sapiens (Human).